A 140-amino-acid polypeptide reads, in one-letter code: Large ribosomal subunit protein uL16c (140 aa).

It belongs to the universal ribosomal protein uL16 family. Part of the 50S ribosomal subunit.

The protein resides in the plastid. It is found in the chloroplast. This is Large ribosomal subunit protein uL16c from Cyanidium caldarium (Red alga).